The chain runs to 438 residues: UDP-N-acetylglucosamine 1-carboxyvinyltransferase 1 (438 aa).

22-23 (KN) lines the phosphoenolpyruvate pocket. Arg-95 provides a ligand contact to UDP-N-acetyl-alpha-D-glucosamine. Cys-119 acts as the Proton donor in catalysis. The residue at position 119 (Cys-119) is a 2-(S-cysteinyl)pyruvic acid O-phosphothioketal. UDP-N-acetyl-alpha-D-glucosamine-binding positions include 124-128 (RPIDL), Asp-307, and Val-329.

This sequence belongs to the EPSP synthase family. MurA subfamily.

It is found in the cytoplasm. The catalysed reaction is phosphoenolpyruvate + UDP-N-acetyl-alpha-D-glucosamine = UDP-N-acetyl-3-O-(1-carboxyvinyl)-alpha-D-glucosamine + phosphate. The protein operates within cell wall biogenesis; peptidoglycan biosynthesis. Its function is as follows. Cell wall formation. Adds enolpyruvyl to UDP-N-acetylglucosamine. The polypeptide is UDP-N-acetylglucosamine 1-carboxyvinyltransferase 1 (Lactiplantibacillus plantarum (strain ATCC BAA-793 / NCIMB 8826 / WCFS1) (Lactobacillus plantarum)).